The primary structure comprises 505 residues: Cytochrome P450 monooxygenase iliC (505 aa).

Residues 6-26 (LIAQHSLTLTIASSVLLVFLL) form a helical membrane-spanning segment. Cys453 is a heme binding site.

The protein belongs to the cytochrome P450 family. Heme serves as cofactor.

It is found in the membrane. The catalysed reaction is (3E,5S)-3-[(2E,4E,8S,10E,12Z)-1-hydroxy-4,8-dimethyltetradeca-2,4,10,12-tetraen-1-ylidene]-5-[(4-hydroxyphenyl)methyl]pyrrolidine-2,4-dione + reduced [NADPH--hemoprotein reductase] + O2 = 3-[(2E,4E,8S,10E,12Z)-4,8-dimethyltetradeca-2,4,10,12-tetraenoyl]-4-hydroxy-5-(4-hydroxyphenyl)-1,2-dihydropyridin-2-one + oxidized [NADPH--hemoprotein reductase] + 2 H2O. Its pathway is mycotoxin biosynthesis. Cytochrome P450 monooxygenase; part of the gene cluster that mediates the biosynthesis of ilicicolin H, a 4-hydroxy-2-pyridonealkaloid that has potent and broad antifungal activities by inhibiting the mitochondrial respiration chain. IliC catalyzes the ring expansion of the tetramate intermediate to the acyclic 2-pyridone intermediate that contains the trans bis-diene chain. The biosynthesis of ilicicolin H starts with formation of the tetramic acid by the hybrid PKS-NRPS synthetase iliA with the partnering trans-enoyl reductase iliB since iliA lacks a designated enoylreductase (ER) domain. The cytochrome P450 monooxygenase iliC then catalyzes the ring expansion of the tetramate to the acyclic 2-pyridone. The pericyclase iliD further converts the acyclic 2-pyridone into 8-epi-ilicicolin H. 8-epi-ilicicolin H might then spontaneously convert to ilicicolin H since ilicicolin H is produced in the absence of the epimerase iliE, in contrast to what was observed for the Talaromyces variabilis ilicolin H biosynthetic pathway. In Neonectria sp. (strain DH2), this protein is Cytochrome P450 monooxygenase iliC.